The chain runs to 283 residues: NifU-like protein 4, mitochondrial (283 aa).

A mitochondrion-targeting transit peptide spans 1 to 48; the sequence is MKGIARLVTSLSRIGGRKVVSGTSTVTSSSSSSLLLSRRSLFISATNL.

The protein belongs to the NifU family. Predominantly expressed in roots.

The protein resides in the mitochondrion. Molecular scaffold for [Fe-S] cluster assembly of mitochondrial iron-sulfur proteins. This Arabidopsis thaliana (Mouse-ear cress) protein is NifU-like protein 4, mitochondrial (NIFU4).